Consider the following 267-residue polypeptide: Cilia- and flagella-associated protein 300 (267 aa).

Belongs to the CFAP300 family. In terms of assembly, interacts with DNAAF2.

The protein localises to the cytoplasm. It is found in the cytoskeleton. The protein resides in the cilium axoneme. Its function is as follows. Cilium- and flagellum-specific protein that plays a role in axonemal structure organization and motility. May play a role in outer and inner dynein arm assembly. This Rattus norvegicus (Rat) protein is Cilia- and flagella-associated protein 300.